A 634-amino-acid chain; its full sequence is DNA-directed RNA polymerase subunit gamma (634 aa).

Residues C74, C76, C89, and C92 each coordinate Zn(2+). D471, D473, and D475 together coordinate Mg(2+).

It belongs to the RNA polymerase beta' chain family. RpoC1 subfamily. In cyanobacteria the RNAP catalytic core is composed of 2 alpha, 1 beta, 1 beta', 1 gamma and 1 omega subunit. When a sigma factor is associated with the core the holoenzyme is formed, which can initiate transcription. Mg(2+) serves as cofactor. Requires Zn(2+) as cofactor.

It catalyses the reaction RNA(n) + a ribonucleoside 5'-triphosphate = RNA(n+1) + diphosphate. Its function is as follows. DNA-dependent RNA polymerase catalyzes the transcription of DNA into RNA using the four ribonucleoside triphosphates as substrates. The protein is DNA-directed RNA polymerase subunit gamma of Prochlorococcus marinus (strain MIT 9313).